A 333-amino-acid chain; its full sequence is Beta-ketoacyl-[acyl-carrier-protein] synthase III (333 aa).

Active-site residues include cysteine 114 and histidine 255. The segment at 256–260 (QANYR) is ACP-binding. Residue asparagine 285 is part of the active site.

This sequence belongs to the thiolase-like superfamily. FabH family. As to quaternary structure, homodimer.

The protein resides in the cytoplasm. It catalyses the reaction malonyl-[ACP] + acetyl-CoA + H(+) = 3-oxobutanoyl-[ACP] + CO2 + CoA. It participates in lipid metabolism; fatty acid biosynthesis. Functionally, catalyzes the condensation reaction of fatty acid synthesis by the addition to an acyl acceptor of two carbons from malonyl-ACP. Catalyzes the first condensation reaction which initiates fatty acid synthesis and may therefore play a role in governing the total rate of fatty acid production. Possesses both acetoacetyl-ACP synthase and acetyl transacylase activities. Its substrate specificity determines the biosynthesis of branched-chain and/or straight-chain of fatty acids. The protein is Beta-ketoacyl-[acyl-carrier-protein] synthase III of Aliarcobacter butzleri (strain RM4018) (Arcobacter butzleri).